The chain runs to 231 residues: AAFATEDDKIVGGYECKAYSQPHQVSLNSGYHFCGGSLVNENWVVSAAHCYQSRVEVRLGEHNIQVTEGSEQFISSSRVIRHPNYSSYNIDNDIMLIKLSKPATLNTYVQPVALPTSCAPAGTMCTVSGWGNTMSSTADKNKLQCLNIPILSYSDCNNSYPGMITNAMFCAGYLEGGKDSCQGDSGGPVVCNGELQGVVSWGYGCAEPGNPGVYAKVCIFNDWLTSTMATY.

Positions 1–4 (AAFA) are cleaved as a signal peptide. A propeptide spans 5 to 9 (TEDDK) (activation peptide). Residues 10-229 (IVGGYECKAY…FNDWLTSTMA (220 aa)) enclose the Peptidase S1 domain. Intrachain disulfides connect C16–C145, C34–C50, C118–C218, C125–C191, C156–C170, and C181–C205. The active-site Charge relay system is H49. Residues E61, N63, V66, and E71 each coordinate Ca(2+). The active-site Charge relay system is the D93. The active-site Charge relay system is S185.

This sequence belongs to the peptidase S1 family. Ca(2+) serves as cofactor.

It is found in the secreted. The protein resides in the extracellular space. It carries out the reaction Preferential cleavage: Arg-|-Xaa, Lys-|-Xaa.. This Salmo salar (Atlantic salmon) protein is Trypsin-2.